Consider the following 697-residue polypeptide: DNA ligase (697 aa).

NAD(+) contacts are provided by residues 44–48 (DGEFD), 93–94 (SL), and glutamate 123. Lysine 125 serves as the catalytic N6-AMP-lysine intermediate. NAD(+) contacts are provided by arginine 146, glutamate 186, lysine 302, and lysine 326. Zn(2+)-binding residues include cysteine 420, cysteine 423, cysteine 439, and cysteine 445. The region spanning 609 to 697 (SIPRNLEGLS…GPDAVTDSGV (89 aa)) is the BRCT domain.

The protein belongs to the NAD-dependent DNA ligase family. LigA subfamily. The cofactor is Mg(2+). It depends on Mn(2+) as a cofactor.

It catalyses the reaction NAD(+) + (deoxyribonucleotide)n-3'-hydroxyl + 5'-phospho-(deoxyribonucleotide)m = (deoxyribonucleotide)n+m + AMP + beta-nicotinamide D-nucleotide.. In terms of biological role, DNA ligase that catalyzes the formation of phosphodiester linkages between 5'-phosphoryl and 3'-hydroxyl groups in double-stranded DNA using NAD as a coenzyme and as the energy source for the reaction. It is essential for DNA replication and repair of damaged DNA. The chain is DNA ligase from Rhodococcus opacus (strain B4).